The chain runs to 327 residues: Flotillin-like protein FloA (327 aa).

Helical transmembrane passes span 6–26 (VLFFVVIGLAIIALAVFFTFV) and 28–48 (IMLWISALAAGVRISIFTLVG).

It belongs to the flotillin-like FloA family. Homooligomerizes.

The protein localises to the cell membrane. It localises to the membrane raft. Functionally, found in functional membrane microdomains (FMM) that may be equivalent to eukaryotic membrane rafts. FMMs are highly dynamic and increase in number as cells age. Flotillins are thought to be important factors in membrane fluidity. The chain is Flotillin-like protein FloA from Priestia megaterium (strain DSM 319 / IMG 1521) (Bacillus megaterium).